The sequence spans 401 residues: Chalcone synthase 1 (401 aa).

Residue cysteine 168 is part of the active site.

The protein belongs to the thiolase-like superfamily. Chalcone/stilbene synthases family.

The catalysed reaction is (E)-4-coumaroyl-CoA + 3 malonyl-CoA + 3 H(+) = 2',4,4',6'-tetrahydroxychalcone + 3 CO2 + 4 CoA. It participates in secondary metabolite biosynthesis; flavonoid biosynthesis. The primary product of this enzyme is 4,2',4',6'-tetrahydroxychalcone (also termed naringenin-chalcone or chalcone) which can under specific conditions spontaneously isomerize into naringenin. The sequence is that of Chalcone synthase 1 (CHS1) from Sorghum bicolor (Sorghum).